Reading from the N-terminus, the 197-residue chain is Probable molybdenum cofactor guanylyltransferase (197 aa).

GTP is bound by residues 12–14, K24, D71, and D103; that span reads LAG. D103 lines the Mg(2+) pocket.

It belongs to the MobA family. Requires Mg(2+) as cofactor.

Its subcellular location is the cytoplasm. The enzyme catalyses Mo-molybdopterin + GTP + H(+) = Mo-molybdopterin guanine dinucleotide + diphosphate. Transfers a GMP moiety from GTP to Mo-molybdopterin (Mo-MPT) cofactor (Moco or molybdenum cofactor) to form Mo-molybdopterin guanine dinucleotide (Mo-MGD) cofactor. The protein is Probable molybdenum cofactor guanylyltransferase of Mycolicibacterium paratuberculosis (strain ATCC BAA-968 / K-10) (Mycobacterium paratuberculosis).